Consider the following 369-residue polypeptide: Aminomethyltransferase (369 aa).

This sequence belongs to the GcvT family. The glycine cleavage system is composed of four proteins: P, T, L and H.

The catalysed reaction is N(6)-[(R)-S(8)-aminomethyldihydrolipoyl]-L-lysyl-[protein] + (6S)-5,6,7,8-tetrahydrofolate = N(6)-[(R)-dihydrolipoyl]-L-lysyl-[protein] + (6R)-5,10-methylene-5,6,7,8-tetrahydrofolate + NH4(+). Functionally, the glycine cleavage system catalyzes the degradation of glycine. This chain is Aminomethyltransferase, found in Xanthomonas euvesicatoria pv. vesicatoria (strain 85-10) (Xanthomonas campestris pv. vesicatoria).